A 413-amino-acid polypeptide reads, in one-letter code: Chemotactic signal transduction system substrate-binding protein BasB (413 aa).

Positions 1–31 are cleaved as a signal peptide; that stretch reads MHSTTRREWLGAIGATAATGLAGCAGVGGAG.

It is found in the cell membrane. Functionally, mediates chemotaxis towards five attractant amino acids (leucine, isoleucine, valine, methionine and cysteine). May function as a receptor that binds the amino acids and transduces a signal to BasT. Has probably no additional role in transport. The sequence is that of Chemotactic signal transduction system substrate-binding protein BasB (basB) from Halobacterium salinarum (strain ATCC 29341 / DSM 671 / R1).